The sequence spans 371 residues: Deoxyhypusine synthase (371 aa).

NAD(+)-binding positions include 112–116, 138–140, glutamate 144, and aspartate 245; these read SNLVT and SAG. 143–144 is a spermidine binding site; that stretch reads EE. Aspartate 250 is a spermidine binding site. Residue glycine 291 participates in NAD(+) binding. Histidine 296 contacts spermidine. NAD(+) is bound at residue 316–317; it reads TG. Spermidine-binding positions include 322–324 and 331–337; these read GSD and EAVSWGK. Catalysis depends on lysine 337, which acts as the Nucleophile. 350–351 serves as a coordination point for NAD(+); the sequence is EA.

This sequence belongs to the deoxyhypusine synthase family. The cofactor is NAD(+).

The catalysed reaction is [eIF5A protein]-L-lysine + spermidine = [eIF5A protein]-deoxyhypusine + propane-1,3-diamine. The protein operates within protein modification; eIF5A hypusination. Catalyzes the NAD-dependent oxidative cleavage of spermidine and the subsequent transfer of the butylamine moiety of spermidine to the epsilon-amino group of a critical lysine residue of the eIF-5A precursor protein to form the intermediate deoxyhypusine residue. This is the first step of the post-translational modification of that lysine into an unusual amino acid residue named hypusine. Hypusination is unique to mature eIF-5A factor and is essential for its function. This Caenorhabditis elegans protein is Deoxyhypusine synthase.